The primary structure comprises 325 residues: D-alanine--D-alanine ligase (325 aa).

Residues 121–316 form the ATP-grasp domain; it reads KYVFEGCGLP…FEELVVRILR (196 aa). 147–202 contributes to the ATP binding site; sequence VAALGTPLSVKPAHEGSSIGIRKVNSAAELAEAYEAAARLDDLVLVEQWIEGPEFT. Residues D270, E283, and N285 each coordinate Mg(2+).

The protein belongs to the D-alanine--D-alanine ligase family. The cofactor is Mg(2+). It depends on Mn(2+) as a cofactor.

It is found in the cytoplasm. The enzyme catalyses 2 D-alanine + ATP = D-alanyl-D-alanine + ADP + phosphate + H(+). It functions in the pathway cell wall biogenesis; peptidoglycan biosynthesis. In terms of biological role, cell wall formation. The polypeptide is D-alanine--D-alanine ligase (Marinobacter nauticus (strain ATCC 700491 / DSM 11845 / VT8) (Marinobacter aquaeolei)).